The primary structure comprises 186 residues: Protein GrpE (186 aa).

Residues 1-15 (MADEQQTLDQQTPEQ) show a composition bias toward polar residues. Residues 1 to 20 (MADEQQTLDQQTPEQPTGAA) are disordered.

The protein belongs to the GrpE family. As to quaternary structure, homodimer.

Its subcellular location is the cytoplasm. Participates actively in the response to hyperosmotic and heat shock by preventing the aggregation of stress-denatured proteins, in association with DnaK and GrpE. It is the nucleotide exchange factor for DnaK and may function as a thermosensor. Unfolded proteins bind initially to DnaJ; upon interaction with the DnaJ-bound protein, DnaK hydrolyzes its bound ATP, resulting in the formation of a stable complex. GrpE releases ADP from DnaK; ATP binding to DnaK triggers the release of the substrate protein, thus completing the reaction cycle. Several rounds of ATP-dependent interactions between DnaJ, DnaK and GrpE are required for fully efficient folding. This Pseudomonas aeruginosa (strain LESB58) protein is Protein GrpE.